A 793-amino-acid chain; its full sequence is Calcium permeable stress-gated cation channel 1 (793 aa).

Residues 1–21 (MAFNGYGIFDSDPRKNPSSDL) lie on the Lumenal side of the membrane. Residues 22-42 (RTQFWLAFLLGASACVFFCFF) traverse the membrane as a helical segment. Topologically, residues 43-95 (RKRWKVLYAPRTTIEGLNLPTLSSSYYKWLMDLVNIPDDVVQNCAGLDGYVFL) are cytoplasmic. The chain crosses the membrane as a helical span at residues 96–116 (LFFKMGIKFLSFASLLGVLII). The Lumenal segment spans residues 117–192 (MPVNKHFRGD…IPGLPQPGDG (76 aa)). A helical membrane pass occupies residues 193 to 213 (FLYLYVLFTYFISIFLLYVLF). Residues 214–444 (SSTKSIADIR…HKFFQGWFIT (231 aa)) are Cytoplasmic-facing. Residues 445–465 (LVTFMIILLWTVPVGAIAVFI) form a helical membrane-spanning segment. Residues 466 to 493 (NLDTIRRLWPELGRMIEDLPFLNSLLRT) lie on the Lumenal side of the membrane. A helical transmembrane segment spans residues 494–514 (FLPTLVYSLFISISPFLFRWL). The Cytoplasmic segment spans residues 515–534 (SSMQGLSSRAEEEIYAVGKN). A helical transmembrane segment spans residues 535–555 (YAYLFVNFFLVYVIAGSTSIW). At 556–577 (ELAKDTTSFAHFLANRLPHQAQ) the chain is on the lumenal side. Residues 578–598 (FFIDLIVLQGIGMFPLKLIQL) form a helical membrane-spanning segment. Over 599-646 (GKLSSYFVRRSFVPYSIASKKFETPDSFSVGIFLPQPMFIMLICLCYS) the chain is Cytoplasmic. Residues 647 to 667 (IISPLILVFGLIYFIIGFLVY) traverse the membrane as a helical segment. Residues 668–687 (KYELIYQMEHPQHSTGELWS) lie on the Lumenal side of the membrane. A helical membrane pass occupies residues 688-708 (TIFLRMIFGCVIMQLTMMGLM). Residues 709-713 (SLRKA) are Cytoplasmic-facing. Residues 714 to 734 (YWLSTVIFPLLCFTVISAYNF) form a helical membrane-spanning segment. Over 735–793 (STMIRSSMQFVSLYYIRTHQSNTLSSESESRNSESSGSYVHPGFDLSNEELPLIDLNTA) the chain is Lumenal. The tract at residues 759-778 (SSESESRNSESSGSYVHPGF) is disordered.

Belongs to the CSC1 (TC 1.A.17) family.

Its subcellular location is the vacuole membrane. In terms of biological role, acts as an osmosensitive calcium-permeable cation channel. The protein is Calcium permeable stress-gated cation channel 1 of Schizosaccharomyces pombe (strain 972 / ATCC 24843) (Fission yeast).